The sequence spans 238 residues: C-type lectin domain family 4 member A (238 aa).

Residues 1–48 are Cytoplasmic-facing; it reads MASEITYAEVKFKNESNSLHTYSESPAAPREKPIRDLRKPGSPSLLLT. The ITIM motif motif lies at 5 to 10; the sequence is ITYAEV. The helical; Signal-anchor for type II membrane protein transmembrane segment at 49 to 69 threads the bilayer; that stretch reads SLMLLLLLLAITFLVAFIIYF. Over 70–238 the chain is Extracellular; sequence QKYSQLLEEK…SVCQMKKINL (169 aa). An N-linked (GlcNAc...) asparagine glycan is attached at asparagine 91. A disulfide bond links cysteine 107 and cysteine 118. A C-type lectin domain is found at 126 to 233; it reads SSASWNKSEE…SLKQKSVCQM (108 aa). 2 N-linked (GlcNAc...) asparagine glycosylation sites follow: asparagine 131 and asparagine 136. Intrachain disulfides connect cysteine 137–cysteine 231 and cysteine 205–cysteine 223. Residues valine 146, glutamate 152, glutamate 197, serine 199, and glutamate 203 each contribute to the Ca(2+) site. Alpha-D-mannopyranose contacts are provided by residues 197–199 and glutamate 203; that span reads EPS. Residue 209 to 211 coordinates N-acetyl-D-glucosamine; sequence IYR. Positions 219 and 220 each coordinate Ca(2+).

In terms of assembly, may interact with PTPN6 via its ITIM site. As to expression, expressed in splenic antigen-presenting cells including B-cells, monocytes/macrophages, and dendritic cells (at protein level). Expressed in spleen and lymph node and slightly increased with dendritic cell maturation.

The protein resides in the cell membrane. Functionally, may be involved in regulating immune reactivity. May play a role in modulating dendritic cells (DC) differentiation and/or maturation. May be involved in the inhibition of B-cell-receptor-mediated calcium mobilization and protein tyrosine phosphorylation. Its function is as follows. C-type lectin receptor that binds carbohydrates mannose and fucose but also weakly interacts with N-acetylglucosamine (GlcNAc) in a Ca(2+)-dependent manner. Involved in regulating immune reactivity. Once triggered by antigen, it is internalized by clathrin-dependent endocytosis and delivers its antigenic cargo into the antigen presentation pathway resulting in cross-priming of CD8(+) T cells. This cross-presentation and cross-priming are enhanced by TLR7 and TLR8 agonists with increased expansion of the CD8(+) T cells, high production of IFNG and TNF with reduced levels of IL4, IL5 and IL13. In plasmacytoid dendritic cells, inhibits TLR9-mediated IFNA and TNF production. May be involved via its ITIM motif (immunoreceptor tyrosine-based inhibitory motifs) in the inhibition of B-cell-receptor-mediated calcium mobilization and protein tyrosine phosphorylation. The protein is C-type lectin domain family 4 member A (Clec4a) of Mus musculus (Mouse).